We begin with the raw amino-acid sequence, 75 residues long: Translational regulator CsrA (75 aa).

Belongs to the CsrA/RsmA family. In terms of assembly, homodimer; the beta-strands of each monomer intercalate to form a hydrophobic core, while the alpha-helices form wings that extend away from the core.

It localises to the cytoplasm. A translational regulator that binds mRNA to regulate translation initiation and/or mRNA stability. Usually binds in the 5'-UTR at or near the Shine-Dalgarno sequence preventing ribosome-binding, thus repressing translation. Its main target seems to be the major flagellin gene, while its function is anatagonized by FliW. The chain is Translational regulator CsrA from Exiguobacterium sp. (strain ATCC BAA-1283 / AT1b).